Here is a 357-residue protein sequence, read N- to C-terminus: CCN family member 3 (357 aa).

Residues 1–31 (MQSVQSTSFCLRKQCLCLTFLLLHLLGQVAA) form the signal peptide. Residues 32–105 (TQRCPPQCPG…SNQTGICTAV (74 aa)) enclose the IGFBP N-terminal domain. 6 disulfides stabilise this stretch: cysteine 35/cysteine 61, cysteine 39/cysteine 63, cysteine 43/cysteine 64, cysteine 50/cysteine 67, cysteine 75/cysteine 89, and cysteine 81/cysteine 102. Residue asparagine 97 is glycosylated (N-linked (GlcNAc...) asparagine). The VWFC domain occupies 108–174 (DNCVFDGVIY…GECCEKWICG (67 aa)). The TSP type-1 domain occupies 205 to 250 (NCIEQTTEWTACSKSCGMGFSTRVTNRNRQCEMLKQTRLCMVRPCE). Cysteine 244 carries the S-palmitoyl cysteine lipid modification. 5 disulfide bridges follow: cysteine 264–cysteine 301, cysteine 281–cysteine 315, cysteine 292–cysteine 331, cysteine 295–cysteine 333, and cysteine 300–cysteine 337. The region spanning 264–338 (CLRTKKSLKA…GTCTCHTNCP (75 aa)) is the CTCK domain. N-linked (GlcNAc...) asparagine glycosylation is present at asparagine 280.

It belongs to the CCN family. As to quaternary structure, interacts with FBLN1. Interacts (via CTCK domain) with NOTCH1 (via the EGF-like repeat region). Interacts with GJA1/CX43. Interacts with ITGA5:ITGB1, ITGAV:ITGB3 and ITGAV:ITGB5. Interacts with ZDHHC22; the interaction may lead to CCN3 palmitoylation. Post-translationally, may be palmitoylated on Cys-244, which is important for extracellular secretion. In terms of tissue distribution, expressed in endothelial cells (at protein level). Expressed in bone marrow and thymic cells.

The protein localises to the secreted. Its subcellular location is the cytoplasm. It is found in the cell junction. It localises to the gap junction. Immediate-early protein playing a role in various cellular processes including proliferation, adhesion, migration, differentiation and survival. Acts by binding to integrins or membrane receptors such as NOTCH1. Essential regulator of hematopoietic stem and progenitor cell function. Inhibits myogenic differentiation through the activation of Notch-signaling pathway. Inhibits vascular smooth muscle cells proliferation by increasing expression of cell-cycle regulators such as CDKN2B or CDKN1A independently of TGFB1 signaling. Ligand of integrins ITGAV:ITGB3 and ITGA5:ITGB1, acts directly upon endothelial cells to stimulate pro-angiogenic activities and induces angiogenesis. In endothelial cells, supports cell adhesion, induces directed cell migration (chemotaxis) and promotes cell survival. Also plays a role in cutaneous wound healing acting as integrin receptor ligand. Supports skin fibroblast adhesion through ITGA5:ITGB1 and ITGA6:ITGB1 and induces fibroblast chemotaxis through ITGAV:ITGB5. Seems to enhance bFGF-induced DNA synthesis in fibroblasts. Involved in bone regeneration as a negative regulator. Enhances the articular chondrocytic phenotype, whereas it repressed the one representing endochondral ossification. Impairs pancreatic beta-cell function, inhibits beta-cell proliferation and insulin secretion. Plays a role as negative regulator of endothelial pro-inflammatory activation reducing monocyte adhesion, its anti-inflammatory effects occur secondary to the inhibition of NF-kappaB signaling pathway. Contributes to the control and coordination of inflammatory processes in atherosclerosis. Attenuates inflammatory pain through regulation of IL1B- and TNF-induced MMP9, MMP2 and CCL2 expression. Inhibits MMP9 expression through ITGB1 engagement. Brain osteoanabolic hormone. Drives osteogenesis in osteochondral skeletal stem cells. During lactation, maintains the maternal skeleton and viability of offspring. The polypeptide is CCN family member 3 (Homo sapiens (Human)).